The following is a 226-amino-acid chain: Glutathione S-transferase kappa 1 (226 aa).

Glutathione contacts are provided by residues 15 to 17 (SPY), asparagine 53, and 199 to 200 (SD).

It belongs to the GST superfamily. Kappa family.

It catalyses the reaction RX + glutathione = an S-substituted glutathione + a halide anion + H(+). This chain is Glutathione S-transferase kappa 1 (gstk-1), found in Caenorhabditis elegans.